A 542-amino-acid chain; its full sequence is Chaperonin GroEL (542 aa).

ATP contacts are provided by residues 30–33 (TLGP), Lys-51, 87–91 (DGTTT), Gly-415, 480–482 (NAA), and Asp-496.

The protein belongs to the chaperonin (HSP60) family. As to quaternary structure, forms a cylinder of 14 subunits composed of two heptameric rings stacked back-to-back. Interacts with the co-chaperonin GroES.

The protein resides in the cytoplasm. It carries out the reaction ATP + H2O + a folded polypeptide = ADP + phosphate + an unfolded polypeptide.. In terms of biological role, together with its co-chaperonin GroES, plays an essential role in assisting protein folding. The GroEL-GroES system forms a nano-cage that allows encapsulation of the non-native substrate proteins and provides a physical environment optimized to promote and accelerate protein folding. The polypeptide is Chaperonin GroEL (Tremblaya princeps).